The chain runs to 163 residues: MASLSQAVNSLFLKEFVGAIFLTMRHFFKQKATINYPFEKGPVSPRFRGEHALRRYPNGEERCIACKLCEAICPAQAITIEAGPRRNDGTRRTVRYDIDMVKCIYCGFCQEACPVDAIVEGPNFEFATETREELYFDKQRLLDNGDRWEREIARNLALDAPYR.

2 4Fe-4S ferredoxin-type domains span residues 53–83 (LRRYPNGEERCIACKLCEAICPAQAITIEAG) and 94–123 (VRYDIDMVKCIYCGFCQEACPVDAIVEGPN). The [4Fe-4S] cluster site is built by Cys63, Cys66, Cys69, Cys73, Cys103, Cys106, Cys109, and Cys113.

The protein belongs to the complex I 23 kDa subunit family. In terms of assembly, NDH-1 is composed of 14 different subunits. Subunits NuoA, H, J, K, L, M, N constitute the membrane sector of the complex. The cofactor is [4Fe-4S] cluster.

The protein localises to the cell inner membrane. It carries out the reaction a quinone + NADH + 5 H(+)(in) = a quinol + NAD(+) + 4 H(+)(out). NDH-1 shuttles electrons from NADH, via FMN and iron-sulfur (Fe-S) centers, to quinones in the respiratory chain. The immediate electron acceptor for the enzyme in this species is believed to be ubiquinone. Couples the redox reaction to proton translocation (for every two electrons transferred, four hydrogen ions are translocated across the cytoplasmic membrane), and thus conserves the redox energy in a proton gradient. The protein is NADH-quinone oxidoreductase subunit I of Agrobacterium fabrum (strain C58 / ATCC 33970) (Agrobacterium tumefaciens (strain C58)).